We begin with the raw amino-acid sequence, 294 residues long: 4-hydroxy-tetrahydrodipicolinate synthase (294 aa).

Residue T44 coordinates pyruvate. The Proton donor/acceptor role is filled by Y132. Residue K160 is the Schiff-base intermediate with substrate of the active site. V202 serves as a coordination point for pyruvate.

It belongs to the DapA family. As to quaternary structure, homotetramer; dimer of dimers.

Its subcellular location is the cytoplasm. The catalysed reaction is L-aspartate 4-semialdehyde + pyruvate = (2S,4S)-4-hydroxy-2,3,4,5-tetrahydrodipicolinate + H2O + H(+). Its pathway is amino-acid biosynthesis; L-lysine biosynthesis via DAP pathway; (S)-tetrahydrodipicolinate from L-aspartate: step 3/4. Functionally, catalyzes the condensation of (S)-aspartate-beta-semialdehyde [(S)-ASA] and pyruvate to 4-hydroxy-tetrahydrodipicolinate (HTPA). This Leptospira borgpetersenii serovar Hardjo-bovis (strain JB197) protein is 4-hydroxy-tetrahydrodipicolinate synthase.